The following is a 207-amino-acid chain: Vascular endothelial growth factor B (207 aa).

The first 21 residues, 1–21, serve as a signal peptide directing secretion; sequence MSPLLRRLLLVALLQLARTQA. Cystine bridges form between Cys47/Cys89, Cys78/Cys122, and Cys82/Cys124. Residues 129–139 show a composition bias toward basic and acidic residues; that stretch reads KESAVKPDRVA. Positions 129 to 178 are disordered; it reads KESAVKPDRVAIPHHRPQPRSVPGWDSTPGASSPADIIHPTPAPGSSARL.

This sequence belongs to the PDGF/VEGF growth factor family. As to quaternary structure, homodimer; disulfide-linked. Can also form heterodimer with VEGF. VEGF-B186 is O-glycosylated. As to expression, abundantly expressed in heart, brain, kidney and skeletal muscle.

It localises to the secreted. Functionally, growth factor for endothelial cells. VEGF-B167 binds heparin and neuropilin-1 whereas the binding to neuropilin-1 of VEGF-B186 is regulated by proteolysis. VEGF-B seems to be required for normal heart function in adult but is not required for proper development of the cardiovascular system either during development or for angiogenesis in adults. The sequence is that of Vascular endothelial growth factor B (Vegfb) from Mus musculus (Mouse).